We begin with the raw amino-acid sequence, 223 residues long: tRNA (guanine-N(7)-)-methyltransferase (223 aa).

S-adenosyl-L-methionine-binding residues include Asp-56, Asp-81, Asp-108, and Asp-130. The active site involves Asp-130. Lys-134 and Asp-166 together coordinate substrate.

Belongs to the class I-like SAM-binding methyltransferase superfamily. TrmB family.

It carries out the reaction guanosine(46) in tRNA + S-adenosyl-L-methionine = N(7)-methylguanosine(46) in tRNA + S-adenosyl-L-homocysteine. The protein operates within tRNA modification; N(7)-methylguanine-tRNA biosynthesis. In terms of biological role, catalyzes the formation of N(7)-methylguanine at position 46 (m7G46) in tRNA. The chain is tRNA (guanine-N(7)-)-methyltransferase from Rubrobacter xylanophilus (strain DSM 9941 / JCM 11954 / NBRC 16129 / PRD-1).